The chain runs to 471 residues: FERM domain-containing protein 8 (471 aa).

3 disordered regions span residues Met1–Val23, Ala381–Asn416, and Thr451–Gly471. In terms of domain architecture, FERM spans Gln31–Ala382.

It is found in the cytoplasm. The protein localises to the cytosol. The protein resides in the cell membrane. Promotes the cell surface stability of rhomboid 5 homologs and prevents their degradation via the endolysosomal pathway. By acting on rhomboid 5 homologs, involved in ADAM17-mediated ligand shedding. Negatively regulates the Wnt/beta-catenin signaling pathway. This Danio rerio (Zebrafish) protein is FERM domain-containing protein 8 (frmd8).